The primary structure comprises 364 residues: Coproporphyrin III ferrochelatase (364 aa).

Residues Arg29 and Tyr118 each coordinate Fe-coproporphyrin III. Fe(2+)-binding residues include His169 and Glu250.

This sequence belongs to the ferrochelatase family.

The protein resides in the cytoplasm. The enzyme catalyses Fe-coproporphyrin III + 2 H(+) = coproporphyrin III + Fe(2+). Its pathway is porphyrin-containing compound metabolism; protoheme biosynthesis. Involved in coproporphyrin-dependent heme b biosynthesis. Catalyzes the insertion of ferrous iron into coproporphyrin III to form Fe-coproporphyrin III. The sequence is that of Coproporphyrin III ferrochelatase from Streptococcus pneumoniae (strain 70585).